The following is a 347-amino-acid chain: Aromatic amino acid aminotransferase (347 aa).

An N6-(pyridoxal phosphate)lysine modification is found at Lys214.

It belongs to the class-II pyridoxal-phosphate-dependent aminotransferase family. As to quaternary structure, homodimer. Requires pyridoxal 5'-phosphate as cofactor.

The catalysed reaction is an aromatic L-alpha-amino acid + 2-oxoglutarate = an aromatic oxo-acid + L-glutamate. Its function is as follows. Aminotransferase that catalyzes the conversion of aromatic amino acids and 2-oxoglutarate into corresponding aromatic oxo acids and L-glutamate. The chain is Aromatic amino acid aminotransferase from Mycobacteroides abscessus (strain ATCC 19977 / DSM 44196 / CCUG 20993 / CIP 104536 / JCM 13569 / NCTC 13031 / TMC 1543 / L948) (Mycobacterium abscessus).